Consider the following 119-residue polypeptide: Ribonuclease P protein component (119 aa).

This sequence belongs to the RnpA family. Consists of a catalytic RNA component (M1 or rnpB) and a protein subunit.

The catalysed reaction is Endonucleolytic cleavage of RNA, removing 5'-extranucleotides from tRNA precursor.. In terms of biological role, RNaseP catalyzes the removal of the 5'-leader sequence from pre-tRNA to produce the mature 5'-terminus. It can also cleave other RNA substrates such as 4.5S RNA. The protein component plays an auxiliary but essential role in vivo by binding to the 5'-leader sequence and broadening the substrate specificity of the ribozyme. The protein is Ribonuclease P protein component of Pediococcus pentosaceus (strain ATCC 25745 / CCUG 21536 / LMG 10740 / 183-1w).